A 641-amino-acid chain; its full sequence is Soluble starch synthase 1, chloroplastic/amyloplastic (641 aa).

Residues 1 to 113 constitute a chloroplast transit peptide; that stretch reads MATAAGMGIG…DSIDKTIFVA (113 aa). Residues 62–96 are disordered; the sequence is TFLVPTSTPPAPTQSPAPAPTPPPLPDSGVGEIEP. Residues 68–87 show a composition bias toward pro residues; it reads STPPAPTQSPAPAPTPPPLP. K147 is a binding site for ADP-alpha-D-glucose.

Belongs to the glycosyltransferase 1 family. Bacterial/plant glycogen synthase subfamily.

It is found in the plastid. The protein resides in the chloroplast. It localises to the amyloplast. It catalyses the reaction [(1-&gt;4)-alpha-D-glucosyl](n) + ADP-alpha-D-glucose = [(1-&gt;4)-alpha-D-glucosyl](n+1) + ADP + H(+). Its pathway is glycan biosynthesis; starch biosynthesis. In Oryza sativa subsp. indica (Rice), this protein is Soluble starch synthase 1, chloroplastic/amyloplastic.